The sequence spans 661 residues: Coagulation factor XIII B chain (661 aa).

Residues 1–20 form the signal peptide; sequence MRLKNLTFIIILIISGELYA. Sushi domains follow at residues 24–88, 89–148, 151–210, 211–269, 272–329, 334–391, 394–452, 453–516, 522–580, and 581–647; these read PCGF…PRCF, KKCT…TCRK, ETCL…KCTK, LKCS…VCEG, NRCP…KCIE, VACE…ECVE, ENCK…VCLE, PCTV…PLCT, GMCT…LCLE, and PCTL…PRCI. 20 cysteine pairs are disulfide-bonded: Cys-25–Cys-76, Cys-59–Cys-87, Cys-91–Cys-135, Cys-118–Cys-146, Cys-153–Cys-197, Cys-180–Cys-208, Cys-213–Cys-255, Cys-241–Cys-267, Cys-274–Cys-316, Cys-302–Cys-327, Cys-336–Cys-378, Cys-364–Cys-389, Cys-396–Cys-439, Cys-425–Cys-450, Cys-454–Cys-505, Cys-486–Cys-515, Cys-524–Cys-567, Cys-553–Cys-578, Cys-582–Cys-636, and Cys-616–Cys-646. N-linked (GlcNAc...) asparagine glycosylation occurs at Asn-162. Asn-545 carries N-linked (GlcNAc...) asparagine glycosylation. The short motif at 617–619 is the Cell attachment site element; it reads RGD.

As to quaternary structure, tetramer of two A chains (F13A1) and two B (F13B) chains.

It is found in the secreted. Its function is as follows. The B chain of factor XIII is not catalytically active, but is thought to stabilize the A subunits and regulate the rate of transglutaminase formation by thrombin. This chain is Coagulation factor XIII B chain (F13B), found in Homo sapiens (Human).